Consider the following 240-residue polypeptide: Ribosomal RNA small subunit methyltransferase I (240 aa).

This sequence belongs to the methyltransferase superfamily. RsmI family.

It localises to the cytoplasm. It catalyses the reaction cytidine(1402) in 16S rRNA + S-adenosyl-L-methionine = 2'-O-methylcytidine(1402) in 16S rRNA + S-adenosyl-L-homocysteine + H(+). Catalyzes the 2'-O-methylation of the ribose of cytidine 1402 (C1402) in 16S rRNA. This chain is Ribosomal RNA small subunit methyltransferase I, found in Leptospira biflexa serovar Patoc (strain Patoc 1 / ATCC 23582 / Paris).